Reading from the N-terminus, the 332-residue chain is GDP-mannose transporter 2 (332 aa).

Residues 1–12 (MSSLKVSQQDKK) lie on the Cytoplasmic side of the membrane. Residues 13–33 (WVNSGSVAILAYCASSILMTI) form a helical membrane-spanning segment. Residues 34 to 47 (TNKVVMSDRTFNMN) are Lumenal-facing. A helical membrane pass occupies residues 48-68 (FLLLFIQSLVCVITLLVLKVL). Topologically, residues 69-84 (GSVNFRSFNKTDARNW) are cytoplasmic. Residues 85–105 (FPISICLVLMIFTSSKSLQYL) traverse the membrane as a helical segment. The Lumenal portion of the chain corresponds to 106 to 108 (SVP). The chain crosses the membrane as a helical span at residues 109–129 (VYTIFKNLTIIVIAYGEVLFF). The Cytoplasmic segment spans residues 130-131 (GS). Residues 132-152 (SVGNMELGSFALMIVSSLIAA) traverse the membrane as a helical segment. At 153 to 174 (HGDYLHSVERLKKMLGPNVSFS) the chain is on the lumenal side. N170 carries N-linked (GlcNAc...) asparagine glycosylation. The chain crosses the membrane as a helical span at residues 175-195 (FIVNIGYFWIAANCFASALFV). Topologically, residues 196-211 (LLMRKRIQVTNFKDFD) are cytoplasmic. A helical membrane pass occupies residues 212-232 (TMFYNNVLSLPLLLLGSYLFE). Over 233-248 (DWSQENLLPHVDIDNL) the chain is Lumenal. A glycan (N-linked (GlcNAc...) asparagine) is linked at N247. A helical transmembrane segment spans residues 249 to 269 (STMIISGLASVAISYCSGWCV). Residues 270 to 274 (RVTSS) lie on the Cytoplasmic side of the membrane. A helical transmembrane segment spans residues 275 to 295 (TTYSMVGALNKLPIALTGFLF). At 296–300 (NDAAR) the chain is on the lumenal side. A helical membrane pass occupies residues 301-321 (NLSSAASILLGFASGIIYAVA). Over 322-332 (KQKKLQNSEKI) the chain is Cytoplasmic.

This sequence belongs to the TPT transporter family. SLC35D subfamily. In terms of assembly, homooligomer.

Its subcellular location is the golgi apparatus membrane. It is found in the cytoplasmic vesicle membrane. The protein resides in the endoplasmic reticulum membrane. Its function is as follows. Involved in the import of GDP-mannose from the cytoplasm into the Golgi lumen. The sequence is that of GDP-mannose transporter 2 (VRG4-2) from Vanderwaltozyma polyspora (strain ATCC 22028 / DSM 70294 / BCRC 21397 / CBS 2163 / NBRC 10782 / NRRL Y-8283 / UCD 57-17) (Kluyveromyces polysporus).